The following is a 351-amino-acid chain: MGHRKLASPRRGSAGLRPRKRSSELLPTPRTWPQINSPNPKLLGFVGYKVGMSHVFMIDDWPNSPTNGKEIYMPVTVLEVPPIIPLALRAYAVDGKGEPNVITEYWSPSSLQFLDITRRIHSFSSFLKNDESKKKFEEKFGSKLDLIKSNLDRIVYFRLLVATQPRKIPSLGKKVPDLVEIQIGGGEKKAQLDYALNVLGKEISIKDVFKEGQLIDVVGVTKGKGFAGVIKRYSVVELPRWHKHRKGSRKIGTRGPSLGTPSYTPQPGQLGFHRRTEYNKRIIKIGDDPKEINPAGGFVRYGIVRNTYILLEGSILGSKKRPIFLREAVRPSYVFENAPKITYVNLLSKQG.

2 disordered regions span residues 1–31 (MGHR…TPRT) and 246–271 (KGSR…GQLG).

This sequence belongs to the universal ribosomal protein uL3 family. In terms of assembly, part of the 50S ribosomal subunit. Forms a cluster with proteins L14 and L24e.

Functionally, one of the primary rRNA binding proteins, it binds directly near the 3'-end of the 23S rRNA, where it nucleates assembly of the 50S subunit. This chain is Large ribosomal subunit protein uL3, found in Saccharolobus islandicus (strain M.14.25 / Kamchatka #1) (Sulfolobus islandicus).